The chain runs to 612 residues: Dihydroxy-acid dehydratase (612 aa).

Aspartate 81 serves as a coordination point for Mg(2+). [2Fe-2S] cluster is bound at residue cysteine 122. Mg(2+) is bound by residues aspartate 123 and lysine 124. Lysine 124 carries the post-translational modification N6-carboxylysine. Cysteine 195 lines the [2Fe-2S] cluster pocket. Residue glutamate 491 coordinates Mg(2+). Serine 517 (proton acceptor) is an active-site residue.

The protein belongs to the IlvD/Edd family. As to quaternary structure, homodimer. [2Fe-2S] cluster is required as a cofactor. It depends on Mg(2+) as a cofactor.

The catalysed reaction is (2R)-2,3-dihydroxy-3-methylbutanoate = 3-methyl-2-oxobutanoate + H2O. It catalyses the reaction (2R,3R)-2,3-dihydroxy-3-methylpentanoate = (S)-3-methyl-2-oxopentanoate + H2O. The protein operates within amino-acid biosynthesis; L-isoleucine biosynthesis; L-isoleucine from 2-oxobutanoate: step 3/4. It participates in amino-acid biosynthesis; L-valine biosynthesis; L-valine from pyruvate: step 3/4. In terms of biological role, functions in the biosynthesis of branched-chain amino acids. Catalyzes the dehydration of (2R,3R)-2,3-dihydroxy-3-methylpentanoate (2,3-dihydroxy-3-methylvalerate) into 2-oxo-3-methylpentanoate (2-oxo-3-methylvalerate) and of (2R)-2,3-dihydroxy-3-methylbutanoate (2,3-dihydroxyisovalerate) into 2-oxo-3-methylbutanoate (2-oxoisovalerate), the penultimate precursor to L-isoleucine and L-valine, respectively. In Haemophilus influenzae (strain PittGG), this protein is Dihydroxy-acid dehydratase.